The chain runs to 2690 residues: Non-reducing polyketide synthase pigA (2690 aa).

Residues 96–211 (NILLSPLVVI…AELSRVLQDF (116 aa)) form the Starter acyltransferase (SAT) domain. The active-site Nucleophile; for transacylase activity is C140. H258 serves as the catalytic Proton donor/acceptor; for transacylase activity. The region spanning 388–804 (ENDIAVIGMS…GSNASLIVTQ (417 aa)) is the Ketosynthase family 3 (KS3) domain. Catalysis depends on for beta-ketoacyl synthase activity residues C553, H688, and H727. One can recognise a Malonyl-CoA:ACP transacylase (MAT) domain in the interval 915–1182 (FGGQISTFVG…VQRLAKQHPS (268 aa)). The segment at 1296–1426 (LTFVGYQDKD…GKVFFRSVDD (131 aa)) is N-terminal hotdog fold. The region spanning 1296–1602 (LTFVGYQDKD…YAKVPKMSMS (307 aa)) is the PKS/mFAS DH domain. The tract at residues 1323 to 1600 (LVSGHLIAQT…INYAKVPKMS (278 aa)) is product template (PT) domain. The active-site Proton acceptor; for dehydratase activity is H1327. A C-terminal hotdog fold region spans residues 1454-1602 (ADDIIQGRNI…YAKVPKMSMS (149 aa)). Catalysis depends on D1510, which acts as the Proton donor; for dehydratase activity. One can recognise a Carrier 1 domain in the interval 1657-1731 (PDISGKVRAM…GLLRCIQEAL (75 aa)). O-(pantetheine 4'-phosphoryl)serine is present on S1691. The segment at 1731–1764 (LGPSEGVEEETDNEEGEDGESSENPSVFTPSDAA) is disordered. The span at 1736-1751 (GVEEETDNEEGEDGES) shows a compositional bias: acidic residues. The span at 1755 to 1764 (PSVFTPSDAA) shows a compositional bias: polar residues. The Carrier 2 domain occupies 1768 to 1842 (SSAKADVAEF…EFDVKVNGKS (75 aa)). At S1802 the chain carries O-(pantetheine 4'-phosphoryl)serine. The segment at 1948 to 2255 (QTLERIKYLP…EVNIQRIFLA (308 aa)) is methyltransferase domain. The Thioester reductase (TE) domain occupies 2320–2564 (VTGATGSLGS…LSWTPVNDVA (245 aa)).

Requires pantetheine 4'-phosphate as cofactor.

It participates in secondary metabolite biosynthesis. Its function is as follows. Non-reducing polyketide synthase; part of the gene cluster that mediates the biosynthesis of azaphilone pigments (MonAzPs), a complex mixture of compounds with a common azaphilone skeleton very widely used as food colorants. PigA catalyzes the first step of MonAzPs biosynthesis and forms the hexaketide precursor from successive condensations of five malonyl-CoA units, with a simple acetyl-CoA starter unit. The starter acyl transferase (SAT) domain of pigA selects an acetyl-CoA starter unit, and the ketoacyl synthase (KS)-acyl transferase (AT)-acyl carrier protein (ACP) domains extend this starter unit five times with malonyl-CoA in five successive decarboxylative Claisen condensation cycles. The methyltransferase (MT) domain conducts a single C-methylation at C-4, most likely at the pentaketide stage. The reactive hexaketide chain then undergoes a product template (PT) domain-mediated C-2 to C-7 aldol cyclization to afford the first aromatic ring, followed by reductive release of the first pathway intermediate by the NADPH-dependent reductive release (R) domain. The role of esterase pigG is not clear, but it may play at most a supplementary role in the formation of the benzaldehyde produced by the pigA nrPKS. This very reactive benzaldehyde is intercepted by the pigC ketoreductase that to provide the first stable enzyme-free MonAzPs intermediate, 6-(4-hydroxy-2-oxopentyl)-3-methyl-2,4-dioxocyclohexane carbaldehyde, also known as M7PKS-1. The FAD-dependent monooxygenase pigN hydroxylates M7PKS-1 at C-4, which triggers the formation of the pyran ring. PigJ, pigK and pigD are involved in the acetylation of the pyran ring. PigJ and pigK form the two subunits of a dedicated fungal FAS that produces the side chain fatty acyl moiety of MonAzPs and pigD transfers the fatty acyl chain to the C-4 alcohol. PigM and pigO are involved in the elimination of the omega-1 alcohol. PigM acts as an O-acetyltransferase that synthesizes the putative O-11 acetyl intermediate whereas pigO eliminates acetic acid to yield an intermediate with a C10(11) double bond. The dehydration of the C-11 alcohol followed by the reduction of the C6(7) double bond by the NAD(P)H-dependent oxidoreductase pigE increases the electrophilicity of the C-5 ketone of the resulting acyl benzopyran. This in turn sets up the C-5 ketone for an intramolecular Knoevenagel aldol condensation with the C-20 enol of the side chain. This condensation affords the characteristic linear tricyclic carbon skeletons of the yellow pigments that serve as the common precursors for the classical yellow pigments monascin and ankaflavin, orange pigments rubopunctatin and monascorubrin, and red pigments ribropunctamine and monascorubramine. The FAD-dependent oxidoreductase pigF is especially invoved in the biosynthesis of orange and red pigments via desaturation of C6(7). The protein is Non-reducing polyketide synthase pigA of Monascus ruber (Mold).